A 111-amino-acid chain; its full sequence is FK506-binding protein 1 (111 aa).

A disordered region spans residues 1 to 20; sequence MGVEKTIITQGSGPSPQVGQ. Polar residues predominate over residues 7-20; the sequence is IITQGSGPSPQVGQ. One can recognise a PPIase FKBP-type domain in the interval 19-111; that stretch reads GQKVTMEYTG…IFDVELKKIG (93 aa).

The protein belongs to the FKBP-type PPIase family. FKBP1 subfamily.

It localises to the cytoplasm. It carries out the reaction [protein]-peptidylproline (omega=180) = [protein]-peptidylproline (omega=0). Its activity is regulated as follows. Inhibited by both FK506 and rapamycin. PPIases accelerate the folding of proteins. It catalyzes the cis-trans isomerization of proline imidic peptide bonds in oligopeptides. This Gibberella zeae (strain ATCC MYA-4620 / CBS 123657 / FGSC 9075 / NRRL 31084 / PH-1) (Wheat head blight fungus) protein is FK506-binding protein 1 (FPR1).